Here is a 449-residue protein sequence, read N- to C-terminus: GTPase Der (449 aa).

2 consecutive EngA-type G domains span residues 4 to 169 (PIVA…PAGE) and 177 to 353 (IQVA…EQHR). GTP is bound by residues 10 to 17 (GRPNVGKS), 57 to 61 (DTGGL), 120 to 123 (NKCE), 183 to 190 (GRPNVGKS), 230 to 234 (DTAGI), and 295 to 298 (NKWD). Residues 354 to 439 (RRVTTAVVND…PIRLLWRSKK (86 aa)) enclose the KH-like domain.

The protein belongs to the TRAFAC class TrmE-Era-EngA-EngB-Septin-like GTPase superfamily. EngA (Der) GTPase family. As to quaternary structure, associates with the 50S ribosomal subunit.

In terms of biological role, GTPase that plays an essential role in the late steps of ribosome biogenesis. This is GTPase Der from Thermosynechococcus vestitus (strain NIES-2133 / IAM M-273 / BP-1).